The primary structure comprises 336 residues: Cell division protein ZipA (336 aa).

The Periplasmic portion of the chain corresponds to 1–6 (MMQDLR). Residues 7–27 (LILIVVGAIAIIALLLHGLWT) traverse the membrane as a helical segment. The Cytoplasmic portion of the chain corresponds to 28–336 (SRKERSSLFR…RIRDVLKANA (309 aa)). Residues 40-51 (PVKRAKKARDET) are compositionally biased toward basic and acidic residues. Residues 40-190 (PVKRAKKARD…APAQPQQPAE (151 aa)) form a disordered region. Residues 76–89 (SFSSSSFDNASFDN) are compositionally biased toward low complexity. Positions 126-138 (PRSQVRGDSNPQV) are enriched in polar residues. Over residues 179-190 (QPAPAQPQQPAE) the composition is skewed to low complexity.

The protein belongs to the ZipA family. As to quaternary structure, interacts with FtsZ via their C-terminal domains.

It localises to the cell inner membrane. In terms of biological role, essential cell division protein that stabilizes the FtsZ protofilaments by cross-linking them and that serves as a cytoplasmic membrane anchor for the Z ring. Also required for the recruitment to the septal ring of downstream cell division proteins. The sequence is that of Cell division protein ZipA from Pectobacterium carotovorum subsp. carotovorum (strain PC1).